A 307-amino-acid chain; its full sequence is Coproporphyrin III ferrochelatase (307 aa).

Fe-coproporphyrin III is bound by residues Y12, R29, 45–46 (RY), S53, and Y124. Fe(2+)-binding residues include H181 and E263.

The protein belongs to the ferrochelatase family.

The protein resides in the cytoplasm. The catalysed reaction is Fe-coproporphyrin III + 2 H(+) = coproporphyrin III + Fe(2+). Its pathway is porphyrin-containing compound metabolism; protoheme biosynthesis. Functionally, involved in coproporphyrin-dependent heme b biosynthesis. Catalyzes the insertion of ferrous iron into coproporphyrin III to form Fe-coproporphyrin III. In Staphylococcus aureus (strain COL), this protein is Coproporphyrin III ferrochelatase.